An 82-amino-acid chain; its full sequence is MAADRAQNLQDTFLNHVRKTKTPLTIFLVNGVKLQGIVTWFDNFCLLLRRDGHSQLVYKHAISTIMPGAPIQLFEGGEDQPA.

Residues 11–71 form the Sm domain; the sequence is DTFLNHVRKT…ISTIMPGAPI (61 aa).

It belongs to the Hfq family. In terms of assembly, homohexamer.

Its function is as follows. RNA chaperone that binds small regulatory RNA (sRNAs) and mRNAs to facilitate mRNA translational regulation in response to envelope stress, environmental stress and changes in metabolite concentrations. Also binds with high specificity to tRNAs. The sequence is that of RNA-binding protein Hfq from Bradyrhizobium diazoefficiens (strain JCM 10833 / BCRC 13528 / IAM 13628 / NBRC 14792 / USDA 110).